Consider the following 682-residue polypeptide: Serine/threonine-protein kinase PLK2 (682 aa).

Positions 25 to 67 are disordered; the sequence is ACGGDSKKKRPQQPSEDGQPQAQVTPAAPHHHHHHSHSGPEIS. Residues 36-48 show a composition bias toward polar residues; sequence QQPSEDGQPQAQV. Residues 79 to 331 enclose the Protein kinase domain; that stretch reads YCRGKVLGKG…LDDIIRHDFF (253 aa). ATP is bound by residues 85–93 and lysine 108; that span reads LGKGGFAKC. Aspartate 202 functions as the Proton acceptor in the catalytic mechanism. Residue threonine 236 is modified to Phosphothreonine. Residues 403-432 are disordered; the sequence is SITQQPSKHRADEEPQPPPTTVARSGTSAV. 2 consecutive POLO box domains span residues 500 to 578 and 598 to 682; these read WVTK…YMEE and YLLQ…QRCN.

The protein belongs to the protein kinase superfamily. Ser/Thr protein kinase family. CDC5/Polo subfamily. As to quaternary structure, interacts with NSF; causing NSF dissociation from GRIA2. Interacts with CIB1. In terms of processing, catalytic activity is enhanced by phosphorylation of Thr-236. In terms of tissue distribution, brain, lung and heart.

It is found in the cytoplasm. The protein resides in the cytoskeleton. The protein localises to the microtubule organizing center. It localises to the centrosome. Its subcellular location is the centriole. It is found in the cell projection. The protein resides in the dendrite. It catalyses the reaction L-seryl-[protein] + ATP = O-phospho-L-seryl-[protein] + ADP + H(+). The enzyme catalyses L-threonyl-[protein] + ATP = O-phospho-L-threonyl-[protein] + ADP + H(+). Its activity is regulated as follows. Activated by phosphorylation of Thr-236. Once activated, activity is stimulated by binding target proteins. Functionally, tumor suppressor serine/threonine-protein kinase involved in synaptic plasticity, centriole duplication and G1/S phase transition. Polo-like kinases act by binding and phosphorylating proteins that are already phosphorylated on a specific motif recognized by the POLO box domains. Phosphorylates CPAP, NPM1, RAPGEF2, RASGRF1, SNCA, SIPA1L1 and SYNGAP1. Plays a key role in synaptic plasticity and memory by regulating the Ras and Rap protein signaling: required for overactivity-dependent spine remodeling by phosphorylating the Ras activator RASGRF1 and the Rap inhibitor SIPA1L1 leading to their degradation by the proteasome. Conversely, phosphorylates the Rap activator RAPGEF2 and the Ras inhibitor SYNGAP1, promoting their activity. Also regulates synaptic plasticity independently of kinase activity, via its interaction with NSF that disrupts the interaction between NSF and the GRIA2 subunit of AMPARs, leading to a rapid rundown of AMPAR-mediated current that occludes long term depression. Required for procentriole formation and centriole duplication by phosphorylating CPAP and NPM1, respectively. Its induction by p53/TP53 suggests that it may participate in the mitotic checkpoint following stress. This is Serine/threonine-protein kinase PLK2 (Plk2) from Mus musculus (Mouse).